The sequence spans 858 residues: Bifunctional uridylyltransferase/uridylyl-removing enzyme (858 aa).

The tract at residues 1–324 (MSAHAAPSPE…PATSGITRVL (324 aa)) is uridylyltransferase. The segment at 325 to 681 (SADRFVEKQG…ARPSPIGDAL (357 aa)) is uridylyl-removing. One can recognise an HD domain in the interval 443–565 (VDQHILMVLR…VGNERYLTAL (123 aa)). 2 consecutive ACT domains span residues 682-763 (QVLV…PSKG) and 790-858 (ILSV…AIAV).

The protein belongs to the GlnD family. Requires Mg(2+) as cofactor.

The catalysed reaction is [protein-PII]-L-tyrosine + UTP = [protein-PII]-uridylyl-L-tyrosine + diphosphate. It carries out the reaction [protein-PII]-uridylyl-L-tyrosine + H2O = [protein-PII]-L-tyrosine + UMP + H(+). Uridylyltransferase (UTase) activity is inhibited by glutamine, while glutamine activates uridylyl-removing (UR) activity. In terms of biological role, modifies, by uridylylation and deuridylylation, the PII regulatory proteins (GlnB and homologs), in response to the nitrogen status of the cell that GlnD senses through the glutamine level. Under low glutamine levels, catalyzes the conversion of the PII proteins and UTP to PII-UMP and PPi, while under higher glutamine levels, GlnD hydrolyzes PII-UMP to PII and UMP (deuridylylation). Thus, controls uridylylation state and activity of the PII proteins, and plays an important role in the regulation of nitrogen assimilation and metabolism. This is Bifunctional uridylyltransferase/uridylyl-removing enzyme from Burkholderia orbicola (strain MC0-3).